The following is a 429-amino-acid chain: O-methyltransferase phnC (429 aa).

S-adenosyl-L-methionine is bound at residue D285.

The protein belongs to the class I-like SAM-binding methyltransferase superfamily. Cation-independent O-methyltransferase family. COMT subfamily.

It carries out the reaction (2'R)-atrovenetin + S-adenosyl-L-methionine = deoxyherqueinone + S-adenosyl-L-homocysteine + H(+). The protein operates within secondary metabolite biosynthesis. Its function is as follows. O-methyltransferase; part of the gene cluster that mediates the biosynthesis of phenalenones such as herqueinone, compounds that have been reported to treat tumors, bacterial infections and/or mycoses, and rheumatic diseases. The non-reducing polyketide synthase phnA synthesizes the heptaketide backbone and cyclizes it into the angular, hemiketal-containing naphtho-gamma-pyrone prephenalenone. The product template (PT) domain of phnA catalyzes only the C4-C9 aldol condensation, which is unprecedented among known PT domains. The transformation of prephenalenone to phenalenones requires an FAD-dependent monooxygenase phnB, which catalyzes the C2 aromatic hydroxylation of prephenalenone and ring opening of the gamma-pyrone ring simultaneously. Subsequent intramolecular deprotonation of C3 phenolic oxygen accelerates phenalenone ring closure to yield the tricyclic phenalenone core with a C2 hydroxylation. The prenyltransferase phnF further catalyzes reverse C-prenylation of phenalenone by direct electrophilic substitution at C6, or possibly via first a forward O-prenylation of a neighboring phenol in phenalenone, followed by a Claisen rearrangement. The hydroalkoxylation enzyme phnH catalyzes the 5-exo-trig cyclization via acid catalysis after the spontaneous deprotonation of 7-OH, which leads to the formation of the dihydrobenzofuran atrovenetin. Atrovenetin is further converted to deoxyherqueinone by the O-methyltransferase phnC which can methylate C2-OH to stabilize the northern portion of the phenalenone core. Finally, the oxidoreductase phnG converts deoxyherqueinone to herqueinone via C6 hydroxylation. The protein is O-methyltransferase phnC of Penicillium herquei.